Here is a 446-residue protein sequence, read N- to C-terminus: Keratin, type I cytoskeletal 25 (446 aa).

Residues 1-74 form a head region; it reads MSLRLSSGSR…VNEGGLLSGN (74 aa). Positions 75–110 are coil 1A; sequence EKVTMQNLNDRLASYLDNVQALQEANADLEQKIKGW. Residues 75–390 form the IF rod domain; it reads EKVTMQNLND…LLIGGDEGAC (316 aa). The segment at 111 to 132 is linker 1; sequence YEKFGPGSCRGLDHDYSRYFPI. Residues 133-224 form a coil 1B region; it reads IDDLKNQIIT…KNHKEEMQAL (92 aa). The segment at 225 to 247 is linker 12; sequence QCAAGGNVNVEMNAAPGVDLTVL. The interval 248–386 is coil 2; sequence LNNMRAEYEA…ETYCLLIGGD (139 aa). A tail region spans residues 387–446; it reads EGACKSSSYKSKDYGSGNAGNQIKDPVKAIVVKKVLEEVDQRSKILTTRLHSLEEKSQSN. The residue at position 438 (serine 438) is a Phosphoserine.

It belongs to the intermediate filament family. Heterodimer of a type I and a type II keratin. Heterodimer with type II keratin KRT5 leading to the formation of keratin intermediate filament (KIF) network. Interacts with KRT6A to form filaments.

It localises to the cytoplasm. In terms of biological role, essential for the proper assembly of type I and type II keratin protein complexes and formation of keratin intermediate filaments in the inner root sheath (irs). Plays a role in the cytoskeleton organization. This Mus musculus (Mouse) protein is Keratin, type I cytoskeletal 25.